Consider the following 228-residue polypeptide: Urease accessory protein UreF (228 aa).

This sequence belongs to the UreF family. UreD, UreF and UreG form a complex that acts as a GTP-hydrolysis-dependent molecular chaperone, activating the urease apoprotein by helping to assemble the nickel containing metallocenter of UreC. The UreE protein probably delivers the nickel.

It is found in the cytoplasm. Functionally, required for maturation of urease via the functional incorporation of the urease nickel metallocenter. The sequence is that of Urease accessory protein UreF from Prochlorococcus marinus subsp. pastoris (strain CCMP1986 / NIES-2087 / MED4).